The sequence spans 295 residues: MRKLLLIITVFFTFNVAQASLPNIVASVNDEPITLNEFRARKKMIMALNNVESLTPAQDKQLSDLALKSLIDESLLFQYAGDREIPQEEIENAIKSIEDRNKMPHGSLLQYLKSRSVNPDSFISQIKSELIKMNILSSLSRSVQVSNKEIDVAILSSDQKDVEISMQVFTSKDGGNKAFTQMNNLKNRLKKCADVKKSLYDNFATMQIITDKLSKIEGVKQTIVKDLTPDKASNVFEVNNKFEITLVCSKKILNVNEDENNYVVNFLTNKKISQKAQKMFENMRKKAAIKIMLPS.

Positions 1 to 19 are cleaved as a signal peptide; the sequence is MRKLLLIITVFFTFNVAQA.

This is an uncharacterized protein from Rickettsia conorii (strain ATCC VR-613 / Malish 7).